The chain runs to 207 residues: Chaperone protein TorD (207 aa).

The protein belongs to the TorD/DmsD family. TorD subfamily.

The protein localises to the cytoplasm. Functionally, involved in the biogenesis of TorA. Acts on TorA before the insertion of the molybdenum cofactor and, as a result, probably favors a conformation of the apoenzyme that is competent for acquiring the cofactor. The sequence is that of Chaperone protein TorD from Aggregatibacter aphrophilus (strain NJ8700) (Haemophilus aphrophilus).